A 643-amino-acid polypeptide reads, in one-letter code: Phosphomethylpyrimidine synthase (643 aa).

Substrate contacts are provided by residues Asn248, Met277, Tyr306, His342, 362 to 364, 403 to 406, and Glu442; these read SRG and DGLR. His446 contacts Zn(2+). Residue Tyr469 coordinates substrate. His510 serves as a coordination point for Zn(2+). [4Fe-4S] cluster contacts are provided by Cys590, Cys593, and Cys598.

Belongs to the ThiC family. As to quaternary structure, homodimer. [4Fe-4S] cluster serves as cofactor.

The catalysed reaction is 5-amino-1-(5-phospho-beta-D-ribosyl)imidazole + S-adenosyl-L-methionine = 4-amino-2-methyl-5-(phosphooxymethyl)pyrimidine + CO + 5'-deoxyadenosine + formate + L-methionine + 3 H(+). The protein operates within cofactor biosynthesis; thiamine diphosphate biosynthesis. In terms of biological role, catalyzes the synthesis of the hydroxymethylpyrimidine phosphate (HMP-P) moiety of thiamine from aminoimidazole ribotide (AIR) in a radical S-adenosyl-L-methionine (SAM)-dependent reaction. This Burkholderia ambifaria (strain MC40-6) protein is Phosphomethylpyrimidine synthase.